The primary structure comprises 298 residues: tRNA U34 carboxymethyltransferase (298 aa).

Residues Lys69, Trp83, Lys88, Gly107, 129-131 (DPS), 156-157 (VE), Tyr176, and Arg291 contribute to the carboxy-S-adenosyl-L-methionine site.

Belongs to the class I-like SAM-binding methyltransferase superfamily. CmoB family. In terms of assembly, homotetramer.

It carries out the reaction carboxy-S-adenosyl-L-methionine + 5-hydroxyuridine(34) in tRNA = 5-carboxymethoxyuridine(34) in tRNA + S-adenosyl-L-homocysteine + H(+). Functionally, catalyzes carboxymethyl transfer from carboxy-S-adenosyl-L-methionine (Cx-SAM) to 5-hydroxyuridine (ho5U) to form 5-carboxymethoxyuridine (cmo5U) at position 34 in tRNAs. This Campylobacter curvus (strain 525.92) protein is tRNA U34 carboxymethyltransferase.